A 633-amino-acid chain; its full sequence is Chaperone protein HtpG (633 aa).

An a; substrate-binding region spans residues 1 to 341; it reads MTAPHETMSF…SADLPLNVSR (341 aa). The tract at residues 342-562 is b; that stretch reads ELLQESRDVK…DGDMSGYLQR (221 aa). Residues 563-633 form a c region; it reads LLKQAGQKAP…YVQRVNRLLA (71 aa).

Belongs to the heat shock protein 90 family. Homodimer.

It localises to the cytoplasm. In terms of biological role, molecular chaperone. Has ATPase activity. This Cupriavidus metallidurans (strain ATCC 43123 / DSM 2839 / NBRC 102507 / CH34) (Ralstonia metallidurans) protein is Chaperone protein HtpG.